A 97-amino-acid polypeptide reads, in one-letter code: Co-chaperonin GroES (97 aa).

It belongs to the GroES chaperonin family. As to quaternary structure, heptamer of 7 subunits arranged in a ring. Interacts with the chaperonin GroEL.

The protein localises to the cytoplasm. Functionally, together with the chaperonin GroEL, plays an essential role in assisting protein folding. The GroEL-GroES system forms a nano-cage that allows encapsulation of the non-native substrate proteins and provides a physical environment optimized to promote and accelerate protein folding. GroES binds to the apical surface of the GroEL ring, thereby capping the opening of the GroEL channel. This is Co-chaperonin GroES from Yersinia enterocolitica serotype O:8 / biotype 1B (strain NCTC 13174 / 8081).